The primary structure comprises 85 residues: Small ribosomal subunit protein bS18c (85 aa).

This sequence belongs to the bacterial ribosomal protein bS18 family. As to quaternary structure, part of the 30S ribosomal subunit.

It is found in the plastid. Its subcellular location is the chloroplast. The protein is Small ribosomal subunit protein bS18c of Tupiella akineta (Green alga).